Reading from the N-terminus, the 117-residue chain is DNA-directed RNA polymerase II subunit RPB11 (117 aa).

M1 is modified (N-acetylmethionine).

It belongs to the archaeal Rpo11/eukaryotic RPB11/RPC19 RNA polymerase subunit family. As to quaternary structure, component of the RNA polymerase II (Pol II) core complex consisting of 12 subunits: a ten-subunit catalytic core composed of POLR2A/RPB1, POLR2B/RPB2, POLR2C/RPB3, POLR2I/RPB9, POLR2J/RPB11, POLR2E/RPABC1, POLR2F/RPABC2, POLR2H/RPABC3, POLR2K/RPABC4 and POLR2L/RPABC5 and a mobile stalk composed of two subunits POLR2D/RPB4 and POLR2G/RPB7, protruding from the core and functioning primarily in transcription initiation. Part of Pol II(G) complex, in which Pol II core associates with an additional subunit POLR2M; unlike conventional Pol II, Pol II(G) functions as a transcriptional repressor. Part of TBP-based Pol II pre-initiation complex (PIC), in which Pol II core assembles with general transcription factors and other specific initiation factors including GTF2E1, GTF2E2, GTF2F1, GTF2F2, TCEA1, ERCC2, ERCC3, GTF2H2, GTF2H3, GTF2H4, GTF2H5, GTF2A1, GTF2A2, GTF2B and TBP; this large multi-subunit PIC complex mediates DNA unwinding and targets Pol II core to the transcription start site where the first phosphodiester bond forms. Interacts with AATF. Interacts with PTPN6; this interaction promotes the recruitment of RNA pol II to the PCK1 promoter.

The protein localises to the nucleus. Its function is as follows. Core component of RNA polymerase II (Pol II), a DNA-dependent RNA polymerase which synthesizes mRNA precursors and many functional non-coding RNAs using the four ribonucleoside triphosphates as substrates. The sequence is that of DNA-directed RNA polymerase II subunit RPB11 (Polr2j) from Mus musculus (Mouse).